A 172-amino-acid chain; its full sequence is C-phycocyanin beta subunit (172 aa).

Residue asparagine 72 is modified to N4-methylasparagine. Cysteine 82 and cysteine 153 together coordinate (2R,3E)-phycocyanobilin.

The protein belongs to the phycobiliprotein family. In terms of assembly, heterodimer of an alpha and a beta subunit, which further assembles into trimers and the trimers into hexamers. Contains two covalently linked bilin chromophores.

It is found in the cellular thylakoid membrane. In terms of biological role, light-harvesting photosynthetic bile pigment-protein from the phycobiliprotein complex (phycobilisome, PBS). Phycocyanin is the major phycobiliprotein in the PBS rod. The sequence is that of C-phycocyanin beta subunit (cpcB) from Synechocystis sp. (strain PCC 6701).